Here is a 122-residue protein sequence, read N- to C-terminus: Large ribosomal subunit protein uL24 (122 aa).

The protein belongs to the universal ribosomal protein uL24 family. As to quaternary structure, part of the 50S ribosomal subunit.

Functionally, one of two assembly initiator proteins, it binds directly to the 5'-end of the 23S rRNA, where it nucleates assembly of the 50S subunit. In terms of biological role, located at the polypeptide exit tunnel on the outside of the subunit. The chain is Large ribosomal subunit protein uL24 from Methanosarcina mazei (strain ATCC BAA-159 / DSM 3647 / Goe1 / Go1 / JCM 11833 / OCM 88) (Methanosarcina frisia).